A 182-amino-acid polypeptide reads, in one-letter code: Peptide deformylase (182 aa).

Fe cation is bound by residues C100 and H142. E143 is an active-site residue. H146 serves as a coordination point for Fe cation.

The protein belongs to the polypeptide deformylase family. It depends on Fe(2+) as a cofactor.

The catalysed reaction is N-terminal N-formyl-L-methionyl-[peptide] + H2O = N-terminal L-methionyl-[peptide] + formate. In terms of biological role, removes the formyl group from the N-terminal Met of newly synthesized proteins. Requires at least a dipeptide for an efficient rate of reaction. N-terminal L-methionine is a prerequisite for activity but the enzyme has broad specificity at other positions. The polypeptide is Peptide deformylase (Bartonella bacilliformis (strain ATCC 35685 / KC583 / Herrer 020/F12,63)).